Here is a 703-residue protein sequence, read N- to C-terminus: Hyperosmolality-gated Ca2+ permeable channel 2.3 (703 aa).

At 1–3 (MLL) the chain is on the extracellular side. Residues 4-26 (SALLTSVGINLGLCFLFFTLYSI) traverse the membrane as a helical segment. Over 27–81 (LRKQPSNVTVYGPRLVKKDGKSQQSNEFNLERLLPTAGWVKRALEPTNDEILSNL) the chain is Cytoplasmic. A helical transmembrane segment spans residues 82 to 115 (GLDALVFIRVFVFSIRVFSFASVVGIFILLPVNY). Residues 116 to 143 (MGTEFEEFFDLPKKSMDNFSISNVNDGS) are Extracellular-facing. The chain crosses the membrane as a helical span at residues 144–165 (NKLWIHFCAIYIFTAVVCSLLY). The Cytoplasmic portion of the chain corresponds to 166 to 355 (YEHKYILTKR…TASFVRRWIS (190 aa)). A coiled-coil region spans residues 228–300 (RTDKLKVLMN…LKQSLLAGEE (73 aa)). Residues 356–382 (NVVVLVAFVALLILYIVPVVLVQGLAN) form a helical membrane-spanning segment. Over 383–410 (LHQLETWFPFLKGILNMKIVSQVITGYL) the chain is Extracellular. Residues 411–432 (PSLIFQLFLLIVPPIMLLLSSM) form a helical membrane-spanning segment. At 433-436 (QGFI) the chain is on the cytoplasmic side. A helical membrane pass occupies residues 437-463 (SHSQIEKSACIKLLIFTVWNSFFANVL). At 464–489 (SGSALYRVNVFLEPKTIPRVLAAAVP) the chain is on the extracellular side. A helical membrane pass occupies residues 490 to 512 (AQASFFVSYVVTSGWTGLSSEIL). Over 513–540 (RLVPLLWSFITKLFGKEDDKEFEVPSTP) the chain is Cytoplasmic. The helical transmembrane segment at 541–561 (FCQEIPRILFFGLLGITYFFL) threads the bilayer. Position 562 (S562) is a topological domain, extracellular. The helical transmembrane segment at 563–586 (PLILPFLLVYYCLGYIIYRNQLLN) threads the bilayer. Topologically, residues 587-598 (VYAAKYETGGKF) are cytoplasmic. Residues 599 to 623 (WPIVHSYTIFSLVLMHIIAVGLFGL) form a helical membrane-spanning segment. Residues 624 to 626 (KEL) lie on the Extracellular side of the membrane. Residues 627–655 (PVASSLTIPLPVLTVLFSIYCQRRFLPNF) traverse the membrane as a helical segment. Residues 656-703 (KSYPTQCLVNKDKADEREQNMSEFYSELVVAYRDPALSASQDSRDISP) are Cytoplasmic-facing.

The protein belongs to the CSC1 (TC 1.A.17) family. In terms of assembly, homodimer.

It localises to the membrane. In terms of biological role, acts as an osmosensitive calcium-permeable cation channel. This is Hyperosmolality-gated Ca2+ permeable channel 2.3 from Arabidopsis thaliana (Mouse-ear cress).